The chain runs to 73 residues: Disintegrin trigramin-gamma (73 aa).

The region spanning 1 to 73 (EAGEDCDCGS…AGCPRNPLHA (73 aa)) is the Disintegrin domain. Disulfide bonds link Cys6/Cys21, Cys8/Cys16, Cys15/Cys38, Cys29/Cys35, Cys34/Cys59, and Cys47/Cys66. The short motif at 51 to 53 (RGD) is the Cell attachment site element.

It belongs to the venom metalloproteinase (M12B) family. P-II subfamily. P-IIa sub-subfamily. As to quaternary structure, monomer (disintegrin). As to expression, expressed by the venom gland.

The protein resides in the secreted. Inhibits fibrinogen interaction with platelets. Acts by binding to alpha-IIb/beta-3 (ITGA2B/ITGB3) on the platelet surface and inhibits aggregation induced by ADP, thrombin, platelet-activating factor and collagen. The chain is Disintegrin trigramin-gamma from Craspedocephalus gramineus (Bamboo pit viper).